A 564-amino-acid chain; its full sequence is Septation ring formation regulator EzrA (564 aa).

Residues 1–4 (MVLY) are Extracellular-facing. Residues 5–23 (IILAIIVIILIAVGVLFYL) traverse the membrane as a helical segment. Over 24–564 (RSNKRQIIEK…KHIEEEVIKQ (541 aa)) the chain is Cytoplasmic. Coiled coils occupy residues 99 to 138 (SFNASQSEIDDANELMDSYEQSYQQQLEDVNEIIALYKDN), 190 to 223 (DGNYVQAHNHIAALNEQMKQLRSYMEEIPELIRE), 271 to 300 (LISRLELEEANDKLANINDKLDDMYDLIEH), 350 to 435 (VRQF…RRLL), and 471 to 550 (VKQL…ESVE).

It belongs to the EzrA family.

It localises to the cell membrane. In terms of biological role, negative regulator of FtsZ ring formation; modulates the frequency and position of FtsZ ring formation. Inhibits FtsZ ring formation at polar sites. Interacts either with FtsZ or with one of its binding partners to promote depolymerization. The chain is Septation ring formation regulator EzrA from Staphylococcus aureus (strain JH1).